The chain runs to 200 residues: MFNIPAVAVSYLIGSLSFAVIVSKYYGMDDPRTYGSGNPGATNVLRSGKKKAAALTLLGDAAKGLVAVLLARVLQEPLGLSDSAIAAVALAALVGHMWPVFFGFKGGKGVATALGVLLALSPTTALVCALIWLVMAFGFKVSSLAALTATIAAPLAALFFMPHTSWIFATLAIAILVLLRHKSNILNLIKGKESKIGEKR.

5 helical membrane-spanning segments follow: residues 2–22 (FNIP…AVIV), 51–71 (KAAA…VLLA), 84–104 (AIAA…FFGF), 114–134 (LGVL…IWLV), and 158–178 (LFFM…ILVL).

The protein belongs to the PlsY family. As to quaternary structure, probably interacts with PlsX.

It is found in the cell inner membrane. The enzyme catalyses an acyl phosphate + sn-glycerol 3-phosphate = a 1-acyl-sn-glycero-3-phosphate + phosphate. It participates in lipid metabolism; phospholipid metabolism. Its function is as follows. Catalyzes the transfer of an acyl group from acyl-phosphate (acyl-PO(4)) to glycerol-3-phosphate (G3P) to form lysophosphatidic acid (LPA). This enzyme utilizes acyl-phosphate as fatty acyl donor, but not acyl-CoA or acyl-ACP. This Neisseria meningitidis serogroup A / serotype 4A (strain DSM 15465 / Z2491) protein is Glycerol-3-phosphate acyltransferase.